The primary structure comprises 645 residues: MLGVCYYPEHWPKERWKEDARRMREAGLSHVRIGEFAWALLEPEPGRLEWGWLDEAIATLAAEGLKVVLGTPTATPPKWLVDRYPEILPVDREGRRRRFGGRRHYCFSSPVYREEARRIVTLLAERYGGLEAVAGFQTDNEYGCHDTVRCYCPRCQEAFRGWLEARYGTIEALNEAWGTAFWSQRYRSFAEVELPHLTVAEPNPSHLLDYYRFASDQVRAFNRLQVEILRAHAPGKFVTHNFMGFFTDLDAFALAQDLDFASWDSYPLGFTDLMPLPPEEKLRYARTGHPDVAAFHHDLYRGVGRGRFWVMEQQPGPVNWAPHNPSPAPGMVRLWTWEALAHGAEVVSYFRWRQAPFAQEQMHAGLHRPDSAPDQGFFEAKRVAEELAALALPPVAQAPVALVFDYEAAWIYEVQPQGAEWSYLGLVYLFYSALRRLGLDVDVVPPGASLRGYAFAVVPSLPIVREEALEAFREAEGPVLFGPRSGSKTETFQIPKELPPGPLQALLPLKVVRVESLPPGLLEVAEGALGRFPLGLWREWVEAPLKPLLTFQDGKGALYREGRYLYLAAWPSPELAGRLLSALAAEAGLKVLSLPEGLRLRRRGTWVFAFNYGPEAVEAPASEGARFLLGSRRVGPYDLAVWEEA.

Arginine 102 lines the substrate pocket. Position 106 (cysteine 106) interacts with Zn(2+). Asparagine 140 lines the substrate pocket. Glutamate 141 functions as the Proton donor in the catalytic mechanism. Zn(2+) contacts are provided by cysteine 150, cysteine 152, and cysteine 155. The active-site Nucleophile is glutamate 312. Substrate-binding positions include tryptophan 320 and 360-363 (EQMH).

This sequence belongs to the glycosyl hydrolase 42 family. Homotrimer.

The catalysed reaction is Hydrolysis of terminal non-reducing beta-D-galactose residues in beta-D-galactosides.. Its activity is regulated as follows. Inhibited by Cu(2+) and Fe(2+), and moderately activated by divalent cations such as Co(2+), Mn(2+) and Zn(2+). Considerably activated by dithiothreitol, beta-mercaptoethanol and cysteine. The polypeptide is Beta-galactosidase (Thermus thermophilus).